The primary structure comprises 679 residues: Protein FAM178B (679 aa).

Residues 70–113 are disordered; it reads PLDQGPRCPARRPCSPASAPAPTSPKKPKIQAPGETFPTDWSPP. Over residues 75–90 the composition is skewed to low complexity; it reads PRCPARRPCSPASAPA.

It belongs to the FAM178 family.

This chain is Protein FAM178B, found in Homo sapiens (Human).